Here is a 161-residue protein sequence, read N- to C-terminus: Protein PLASTID TRANSCRIPTIONALLY ACTIVE 7 (161 aa).

Residues 1 to 32 (MASFTCSSPSSILPIIDTRSGNLRCTFQSQVS) constitute a chloroplast transit peptide.

As to quaternary structure, component of the transcriptionally active chromosome (TAC) complexes. Interacts with FLN1, PTAC10, PTAC12/HMR/PAP5 and PTAC14. Binds to SL1/MTERF3. In terms of tissue distribution, mostly expressed in leaves, flowers and seedlings, and, to a lower extent, in roots and stems.

It is found in the plastid. It localises to the chloroplast. Its function is as follows. Essential for chloroplast development, especially for thylakoid formation. Involved in plastid gene expression, probably by maintaining plastid-encoded RNA polymerase (PEP) activity. This Arabidopsis thaliana (Mouse-ear cress) protein is Protein PLASTID TRANSCRIPTIONALLY ACTIVE 7.